The following is a 351-amino-acid chain: Ribosomal RNA large subunit methyltransferase M (351 aa).

Residues S186, A219–G222, D238, D258, and D274 contribute to the S-adenosyl-L-methionine site. K303 acts as the Proton acceptor in catalysis.

It belongs to the class I-like SAM-binding methyltransferase superfamily. RNA methyltransferase RlmE family. RlmM subfamily. Monomer.

The protein localises to the cytoplasm. It carries out the reaction cytidine(2498) in 23S rRNA + S-adenosyl-L-methionine = 2'-O-methylcytidine(2498) in 23S rRNA + S-adenosyl-L-homocysteine + H(+). Catalyzes the 2'-O-methylation at nucleotide C2498 in 23S rRNA. The chain is Ribosomal RNA large subunit methyltransferase M from Xylella fastidiosa (strain M12).